The chain runs to 128 residues: MSLRLDTTPSCNSARPLHALQVLLLLSLLLTALASSTKGQTKRNLAKGKEESLDSDLYAELRCMCIKTTSGIHPKNIQSLEVIGKGTHCNQVEVIATLKDGRKICLDPDAPRIKKIVQKKLAGDESAD.

The first 34 residues, 1 to 34 (MSLRLDTTPSCNSARPLHALQVLLLLSLLLTALA), serve as a signal peptide directing secretion. Disulfide bonds link Cys63/Cys89 and Cys65/Cys105.

It belongs to the intercrine alpha (chemokine CxC) family. As to quaternary structure, beta-thromboglobulin is a homotetramer. Proteolytic removal of residues 1-9 produces the active peptide connective tissue-activating peptide III (CTAP-III) (low-affinity platelet factor IV (LA-PF4)). In terms of processing, proteolytic removal of residues 1-13 produces the active peptide beta-thromboglobulin, which is released from platelets along with platelet factor 4 and platelet-derived growth factor. Post-translationally, NAP-2(1-66) is produced by proteolytical processing, probably after secretion by leukocytes other than neutrophils. NAP-2(73) and NAP-2(74) seem not be produced by proteolytical processing of secreted precursors but are released in an active form from platelets.

It localises to the secreted. Its function is as follows. LA-PF4 stimulates DNA synthesis, mitosis, glycolysis, intracellular cAMP accumulation, prostaglandin E2 secretion, and synthesis of hyaluronic acid and sulfated glycosaminoglycan. It also stimulates the formation and secretion of plasminogen activator by human synovial cells. NAP-2 is a ligand for CXCR1 and CXCR2, and NAP-2, NAP-2(73), NAP-2(74), NAP-2(1-66), and most potent NAP-2(1-63) are chemoattractants and activators for neutrophils. TC-1 and TC-2 are antibacterial proteins, in vitro released from activated platelet alpha-granules. CTAP-III(1-81) is more potent than CTAP-III desensitize chemokine-induced neutrophil activation. This Homo sapiens (Human) protein is Platelet basic protein (PPBP).